Reading from the N-terminus, the 492-residue chain is Alpha-amylase-related protein (492 aa).

The first 18 residues, 1-18 (MRLSLSVLLCLGLALTLA), serve as a signal peptide directing secretion. Glutamine 19 is modified (pyrrolidone carboxylic acid). Cysteines 46 and 102 form a disulfide. Positions 116, 167, and 176 each coordinate Ca(2+). Cysteine 155 and cysteine 169 are joined by a disulfide. A chloride-binding site is contributed by arginine 204. The active-site Nucleophile is aspartate 206. Position 210 (histidine 210) interacts with Ca(2+). Catalysis depends on glutamate 243, which acts as the Proton donor. Asparagine 306 and arginine 341 together coordinate chloride. 3 cysteine pairs are disulfide-bonded: cysteine 374–cysteine 380, cysteine 416–cysteine 439, and cysteine 446–cysteine 458.

Belongs to the glycosyl hydrolase 13 family. As to quaternary structure, monomer. Ca(2+) serves as cofactor. It depends on chloride as a cofactor.

It is found in the secreted. It carries out the reaction Endohydrolysis of (1-&gt;4)-alpha-D-glucosidic linkages in polysaccharides containing three or more (1-&gt;4)-alpha-linked D-glucose units.. This Drosophila willistoni (Fruit fly) protein is Alpha-amylase-related protein (Amyrel).